The following is a 247-amino-acid chain: Carboxy-S-adenosyl-L-methionine synthase (247 aa).

S-adenosyl-L-methionine-binding positions include Tyr-39, 89–90 (DN), 117–118 (DI), Asn-132, and Arg-199.

This sequence belongs to the class I-like SAM-binding methyltransferase superfamily. Cx-SAM synthase family. As to quaternary structure, homodimer.

It carries out the reaction prephenate + S-adenosyl-L-methionine = carboxy-S-adenosyl-L-methionine + 3-phenylpyruvate + H2O. Catalyzes the conversion of S-adenosyl-L-methionine (SAM) to carboxy-S-adenosyl-L-methionine (Cx-SAM). The sequence is that of Carboxy-S-adenosyl-L-methionine synthase from Sodalis glossinidius (strain morsitans).